Reading from the N-terminus, the 211-residue chain is Small ribosomal subunit protein uS3 (211 aa).

In terms of domain architecture, KH type-2 spans 38-106 (LRSFVKKTFH…EVELHIVEVK (69 aa)).

Belongs to the universal ribosomal protein uS3 family. As to quaternary structure, part of the 30S ribosomal subunit. Forms a tight complex with proteins S10 and S14.

Binds the lower part of the 30S subunit head. Binds mRNA in the 70S ribosome, positioning it for translation. In Anaplasma phagocytophilum (strain HZ), this protein is Small ribosomal subunit protein uS3.